A 416-amino-acid polypeptide reads, in one-letter code: UDP-N-acetylglucosamine 1-carboxyvinyltransferase (416 aa).

22–23 provides a ligand contact to phosphoenolpyruvate; the sequence is KN. Arg-92 contributes to the UDP-N-acetyl-alpha-D-glucosamine binding site. The Proton donor role is filled by Cys-116. The residue at position 116 (Cys-116) is a 2-(S-cysteinyl)pyruvic acid O-phosphothioketal. Residues 121–125, Asp-304, and Ile-326 contribute to the UDP-N-acetyl-alpha-D-glucosamine site; that span reads RPVDQ.

It belongs to the EPSP synthase family. MurA subfamily.

It is found in the cytoplasm. It catalyses the reaction phosphoenolpyruvate + UDP-N-acetyl-alpha-D-glucosamine = UDP-N-acetyl-3-O-(1-carboxyvinyl)-alpha-D-glucosamine + phosphate. It participates in cell wall biogenesis; peptidoglycan biosynthesis. In terms of biological role, cell wall formation. Adds enolpyruvyl to UDP-N-acetylglucosamine. This chain is UDP-N-acetylglucosamine 1-carboxyvinyltransferase, found in Aromatoleum aromaticum (strain DSM 19018 / LMG 30748 / EbN1) (Azoarcus sp. (strain EbN1)).